We begin with the raw amino-acid sequence, 217 residues long: Adenylate kinase (217 aa).

Residue 10–15 coordinates ATP; that stretch reads GAGKGT. Residues 30 to 59 form an NMP region; the sequence is STGDMFRAAMKNETELGLKAKSYMDAGELV. AMP contacts are provided by residues Thr-31, Arg-36, 57-59, 85-88, and Gln-92; these read ELV and GFPR. An LID region spans residues 126 to 163; that stretch reads GRRVSPTSGRTYHVIFNPPKVEGICDVDGSELIQRDDD. Residues Arg-127 and 136–137 each bind ATP; that span reads TY. Residues Arg-160 and Arg-171 each coordinate AMP. ATP is bound at residue Gln-199.

This sequence belongs to the adenylate kinase family. In terms of assembly, monomer.

The protein resides in the cytoplasm. The catalysed reaction is AMP + ATP = 2 ADP. Its pathway is purine metabolism; AMP biosynthesis via salvage pathway; AMP from ADP: step 1/1. Catalyzes the reversible transfer of the terminal phosphate group between ATP and AMP. Plays an important role in cellular energy homeostasis and in adenine nucleotide metabolism. The chain is Adenylate kinase from Halalkalibacterium halodurans (strain ATCC BAA-125 / DSM 18197 / FERM 7344 / JCM 9153 / C-125) (Bacillus halodurans).